We begin with the raw amino-acid sequence, 217 residues long: GTP-binding protein Rit2 (217 aa).

GTP contacts are provided by residues 27-34 (GAGGVGKS), 74-78 (DTAGQ), and 133-136 (NKID).

It belongs to the small GTPase superfamily. Ras family. In terms of assembly, interacts with AFDN, the C-terminal domain of RALGDS and RLF, but not with RIN1 and PIK3CA. RLF binds exclusively to the active GTP-bound form. Binds calmodulin. Interacts with PLXNB3.

The protein localises to the nucleus. It localises to the cell membrane. It catalyses the reaction GTP + H2O = GDP + phosphate + H(+). Alternates between an inactive form bound to GDP and an active form bound to GTP. In terms of biological role, binds and exchanges GTP and GDP. In Rattus norvegicus (Rat), this protein is GTP-binding protein Rit2 (Rit2).